A 332-amino-acid polypeptide reads, in one-letter code: Probable allantoicase (332 aa).

The protein belongs to the allantoicase family.

It catalyses the reaction allantoate + H2O = (S)-ureidoglycolate + urea. Its pathway is nitrogen metabolism; (S)-allantoin degradation; (S)-ureidoglycolate from allantoate (aminidohydrolase route): step 1/1. The polypeptide is Probable allantoicase (Pseudomonas aeruginosa (strain UCBPP-PA14)).